The chain runs to 109 residues: Flagellar hook-basal body complex protein FliE (109 aa).

Belongs to the FliE family.

The protein localises to the bacterial flagellum basal body. This Pseudomonas fluorescens (strain Pf0-1) protein is Flagellar hook-basal body complex protein FliE.